Consider the following 213-residue polypeptide: MSIIPLLHLARELDHDYRTDWGHLLEDDFGFGVHAHDLFHPRRLLLPNTLGLGRRRYSPYERSHGHHNQMSRRASGGPNALLPAVGKDGFQVCMDVSQFKPNELTVKVVDNTVVVEGKHEEREDGHGMIQRHFVRKYTLPKGFDPNEVVSTVSSDGVLTLKAPPPPSKEQAKSERIVQIQQTGPAHLSVKAPAPEAGDGKAENGSGEKMETSK.

Phosphoserine is present on residues S58 and S75. The region spanning 71–182 (SRRASGGPNA…SERIVQIQQT (112 aa)) is the sHSP domain. Positions 157–213 (VLTLKAPPPPSKEQAKSERIVQIQQTGPAHLSVKAPAPEAGDGKAENGSGEKMETSK) are disordered. The span at 197 to 213 (GDGKAENGSGEKMETSK) shows a compositional bias: basic and acidic residues.

Belongs to the small heat shock protein (HSP20) family.

The polypeptide is Heat shock protein 27 (Hsp27) (Drosophila melanogaster (Fruit fly)).